We begin with the raw amino-acid sequence, 299 residues long: Light-independent protochlorophyllide reductase iron-sulfur ATP-binding protein (299 aa).

Positions 1–23 (MSPLDRTPPSLRGQDGEGSVQVH) are disordered. ATP-binding positions include 43 to 48 (GIGKST) and lysine 72. Serine 47 is a binding site for Mg(2+). 2 residues coordinate [4Fe-4S] cluster: cysteine 128 and cysteine 162. Residues 213-214 (NR) and 237-239 (PDL) contribute to the ATP site.

This sequence belongs to the NifH/BchL/ChlL family. In terms of assembly, homodimer. Protochlorophyllide reductase is composed of three subunits; BchL, BchN and BchB. It depends on [4Fe-4S] cluster as a cofactor.

The enzyme catalyses chlorophyllide a + oxidized 2[4Fe-4S]-[ferredoxin] + 2 ADP + 2 phosphate = protochlorophyllide a + reduced 2[4Fe-4S]-[ferredoxin] + 2 ATP + 2 H2O. It functions in the pathway porphyrin-containing compound metabolism; bacteriochlorophyll biosynthesis (light-independent). Functionally, component of the dark-operative protochlorophyllide reductase (DPOR) that uses Mg-ATP and reduced ferredoxin to reduce ring D of protochlorophyllide (Pchlide) to form chlorophyllide a (Chlide). This reaction is light-independent. The L component serves as a unique electron donor to the NB-component of the complex, and binds Mg-ATP. The sequence is that of Light-independent protochlorophyllide reductase iron-sulfur ATP-binding protein from Roseobacter denitrificans (strain ATCC 33942 / OCh 114) (Erythrobacter sp. (strain OCh 114)).